Consider the following 437-residue polypeptide: GTPase Era, mitochondrial (437 aa).

Residues 1-20 (MAAPRRYFPGIVRALLGAWQ) constitute a mitochondrion transit peptide. An Era-type G domain is found at 112–330 (RVLRVVLLGA…QYLLTQAQPG (219 aa)). Residues 120-127 (GAPNAGKS) form a G1 region. GTP is bound at residue 120–127 (GAPNAGKS). The G2 stretch occupies residues 146–150 (HTTRC). The interval 167–170 (DTPG) is G3. 167-171 (DTPGI) serves as a coordination point for GTP. Phosphoserine is present on Ser-173. 236–239 (NKVD) serves as a coordination point for GTP. The tract at residues 236 to 239 (NKVD) is G4. Residues 272-293 (SRPSTHCPGPETEDPNTHAVRS) are disordered. The segment at 308–310 (LSA) is G5. Residues 360-437 (LPEEVPYSVQ…LLRLSVKLLK (78 aa)) enclose the KH type-2 domain.

Belongs to the TRAFAC class TrmE-Era-EngA-EngB-Septin-like GTPase superfamily. Era GTPase family.

The protein resides in the mitochondrion matrix. Its subcellular location is the mitochondrion inner membrane. Functionally, probable GTPase that plays a role in the mitochondrial ribosomal small subunit assembly. Specifically binds the 12S mitochondrial rRNA (12S mt-rRNA) to a 33 nucleotide section delineating the 3' terminal stem-loop region. May act as a chaperone that protects the 12S mt-rRNA on the 28S mitoribosomal subunit during ribosomal small subunit assembly. The polypeptide is GTPase Era, mitochondrial (Eral1) (Rattus norvegicus (Rat)).